Here is a 337-residue protein sequence, read N- to C-terminus: Lipoyl synthase (337 aa).

Residues Cys81, Cys86, Cys92, Cys107, Cys111, Cys114, and Ser323 each contribute to the [4Fe-4S] cluster site. The Radical SAM core domain occupies 93-312 (FSHGTATFMI…EDYGNALGFS (220 aa)).

This sequence belongs to the radical SAM superfamily. Lipoyl synthase family. [4Fe-4S] cluster is required as a cofactor.

The protein resides in the cytoplasm. The enzyme catalyses [[Fe-S] cluster scaffold protein carrying a second [4Fe-4S](2+) cluster] + N(6)-octanoyl-L-lysyl-[protein] + 2 oxidized [2Fe-2S]-[ferredoxin] + 2 S-adenosyl-L-methionine + 4 H(+) = [[Fe-S] cluster scaffold protein] + N(6)-[(R)-dihydrolipoyl]-L-lysyl-[protein] + 4 Fe(3+) + 2 hydrogen sulfide + 2 5'-deoxyadenosine + 2 L-methionine + 2 reduced [2Fe-2S]-[ferredoxin]. The protein operates within protein modification; protein lipoylation via endogenous pathway; protein N(6)-(lipoyl)lysine from octanoyl-[acyl-carrier-protein]: step 2/2. Catalyzes the radical-mediated insertion of two sulfur atoms into the C-6 and C-8 positions of the octanoyl moiety bound to the lipoyl domains of lipoate-dependent enzymes, thereby converting the octanoylated domains into lipoylated derivatives. The chain is Lipoyl synthase from Xanthomonas campestris pv. campestris (strain B100).